The primary structure comprises 397 residues: MKQVYLDNNATTRLDPMVLEAMMPFLTDFYGNPSSIHDFGIPAQAALERAHQQAAALLGAEYPSEIIFTSWPRATPRHAAIALLPERREIITSVVEHPATLAACEHLERQGYRIHRIAVDSEGALDMAQFRAALSPRVALVSVMWANNETGVLFPIGEMAELAHEQGALFHCDAVQVVGKIPIAVGQTRIDMLSCSAHKFHGPKGVGCLYLRRGTRFRPLLRGGHQEYGRRAGTENICGIVGMGAACELANIHLPGMTHIGQLRNRLEHRLLASVPSVMVMGGGQPRVPGTVNLAFEFIEGEAILLLLNQAGIAASSGSACTSGSLEPSHVMRAMNIPYTAAHGTIRFSLSRYTREKEIDYVVATLPPIIDRLRALSPYWQNGKPRPADAVFTPVYG.

Residues Asn148, Gln176, and 196–198 (SAH) contribute to the pyridoxal 5'-phosphate site. Lys199 is modified (N6-(pyridoxal phosphate)lysine). Thr234 contributes to the pyridoxal 5'-phosphate binding site. Residue Cys321 is the Cysteine persulfide intermediate of the active site. Cys321 provides a ligand contact to [2Fe-2S] cluster.

Belongs to the class-V pyridoxal-phosphate-dependent aminotransferase family. NifS/IscS subfamily. Homodimer. Pyridoxal 5'-phosphate is required as a cofactor.

It carries out the reaction (sulfur carrier)-H + L-cysteine = (sulfur carrier)-SH + L-alanine. In terms of biological role, catalyzes the removal of elemental sulfur atoms from cysteine to produce alanine. Seems to participate in the biosynthesis of the nitrogenase metalloclusters by providing the inorganic sulfur required for the Fe-S core formation. The polypeptide is Cysteine desulfurase (Klebsiella pneumoniae).